Consider the following 106-residue polypeptide: Cell division protein FtsB (106 aa).

Over 1–3 (MGK) the chain is Cytoplasmic. A helical membrane pass occupies residues 4 to 21 (LTLLLLVLLGWLQYSLWL). Over 22–106 (GKNGIHDFVR…GTPSTQNNAQ (85 aa)) the chain is Periplasmic. Positions 31–62 (RVKEDVAAQEANNSTLKARNDQLFAEIDDLNG) form a coiled coil.

It belongs to the FtsB family. Part of a complex composed of FtsB, FtsL and FtsQ.

The protein localises to the cell inner membrane. Essential cell division protein. May link together the upstream cell division proteins, which are predominantly cytoplasmic, with the downstream cell division proteins, which are predominantly periplasmic. In Yersinia pseudotuberculosis serotype O:1b (strain IP 31758), this protein is Cell division protein FtsB.